Consider the following 103-residue polypeptide: Omega toxin Ap5 (103 aa).

The N-terminal stretch at 1–22 is a signal peptide; that stretch reads MNTIQVILFAVVLVLTVTVGQA. A propeptide spanning residues 23–57 is cleaved from the precursor; the sequence is DEDSAETSLLRKLEEAEASMFGQYLEESKNSREKR. 3 disulfides stabilise this stretch: Cys-58/Cys-73, Cys-65/Cys-78, and Cys-72/Cys-93.

The protein belongs to the neurotoxin 14 (magi-1) family. 08 (Ltx-4) subfamily. As to expression, expressed by the venom duct.

Its subcellular location is the secreted. Its function is as follows. Shows a weak inhibition on the voltage-gated calcium channel Cav2.1/CACNA1A and some voltage-gated sodium channels (with 1 uM toxin tested: 22.08% inhibition on Cav2.1/CACNA1A, 6.6% on Nav1.1/SCN1A, 4.2% on Nav1.5, and 16% on Nav1.7). Functionally, shows a weak inhibition on the voltage-gated calcium channel Cav2.1/CACNA1A (28.06% at 1 uM). This chain is Omega toxin Ap5, found in Acanthoscurria paulensis (Brazilian giant black tarantula spider).